Here is a 713-residue protein sequence, read N- to C-terminus: Probable tRNA (uracil-O(2)-)-methyltransferase (713 aa).

Disordered stretches follow at residues 49-92 and 480-508; these read TLRS…REGT and LHSR…HDAG. S76 carries the post-translational modification Phosphoserine. Residues 79-89 are compositionally biased toward basic and acidic residues; that stretch reads GEPESGPRASR. Residue S489 is modified to Phosphoserine. The C3H1-type zinc finger occupies 669-698; the sequence is FKTRICWFFAHHPDGCVLPAAQCPFAHGPE.

It belongs to the TRM44 family.

It is found in the cytoplasm. The catalysed reaction is uridine(44) in tRNA(Ser) + S-adenosyl-L-methionine = 2'-O-methyluridine(44) in tRNA(Ser) + S-adenosyl-L-homocysteine + H(+). Its function is as follows. Probable adenosyl-L-methionine (AdoMet)-dependent tRNA (uracil-O(2)-)-methyltransferase. The chain is Probable tRNA (uracil-O(2)-)-methyltransferase (Trmt44) from Mus musculus (Mouse).